Consider the following 118-residue polypeptide: Beta-2-microglobulin (118 aa).

Positions 1 to 20 (MARFVVLVLLGLLYLSHLDA) are cleaved as a signal peptide. The Ig-like C1-type domain maps to 25–113 (PKVQVYSRHP…TTLSEPKVVK (89 aa)). A disulfide bond links C45 and C99.

Belongs to the beta-2-microglobulin family. Heterodimer of an alpha chain and a beta chain. Beta-2-microglobulin is the beta-chain of major histocompatibility complex class I molecules.

It is found in the secreted. Functionally, component of the class I major histocompatibility complex (MHC). Involved in the presentation of peptide antigens to the immune system. In Felis catus (Cat), this protein is Beta-2-microglobulin (B2M).